Here is a 264-residue protein sequence, read N- to C-terminus: Acyl-[acyl-carrier-protein]--UDP-N-acetylglucosamine O-acyltransferase (264 aa).

It belongs to the transferase hexapeptide repeat family. LpxA subfamily. Homotrimer.

It localises to the cytoplasm. The catalysed reaction is a (3R)-hydroxyacyl-[ACP] + UDP-N-acetyl-alpha-D-glucosamine = a UDP-3-O-[(3R)-3-hydroxyacyl]-N-acetyl-alpha-D-glucosamine + holo-[ACP]. The protein operates within glycolipid biosynthesis; lipid IV(A) biosynthesis; lipid IV(A) from (3R)-3-hydroxytetradecanoyl-[acyl-carrier-protein] and UDP-N-acetyl-alpha-D-glucosamine: step 1/6. Involved in the biosynthesis of lipid A, a phosphorylated glycolipid that anchors the lipopolysaccharide to the outer membrane of the cell. This Chlorobium phaeobacteroides (strain DSM 266 / SMG 266 / 2430) protein is Acyl-[acyl-carrier-protein]--UDP-N-acetylglucosamine O-acyltransferase.